Here is a 794-residue protein sequence, read N- to C-terminus: Phenylalanine--tRNA ligase beta subunit (794 aa).

The tRNA-binding domain maps to 40 to 158 (NSLNSELILG…LKKYIGSDVK (119 aa)). Residues 402–477 (KNKQSLEIKL…RLYSYDKIDE (76 aa)) enclose the B5 domain. D455, D461, E464, and E465 together coordinate Mg(2+). The FDX-ACB domain occupies 702–794 (SKFQSSSRDL…NIKQMKVVIR (93 aa)).

Belongs to the phenylalanyl-tRNA synthetase beta subunit family. Type 1 subfamily. Tetramer of two alpha and two beta subunits. Requires Mg(2+) as cofactor.

The protein localises to the cytoplasm. The enzyme catalyses tRNA(Phe) + L-phenylalanine + ATP = L-phenylalanyl-tRNA(Phe) + AMP + diphosphate + H(+). This is Phenylalanine--tRNA ligase beta subunit from Mycoplasma mycoides subsp. mycoides SC (strain CCUG 32753 / NCTC 10114 / PG1).